Here is a 313-residue protein sequence, read N- to C-terminus: Porphobilinogen deaminase (313 aa).

The residue at position 242 (Cys242) is an S-(dipyrrolylmethanemethyl)cysteine.

The protein belongs to the HMBS family. Monomer. It depends on dipyrromethane as a cofactor.

The catalysed reaction is 4 porphobilinogen + H2O = hydroxymethylbilane + 4 NH4(+). The protein operates within porphyrin-containing compound metabolism; protoporphyrin-IX biosynthesis; coproporphyrinogen-III from 5-aminolevulinate: step 2/4. Tetrapolymerization of the monopyrrole PBG into the hydroxymethylbilane pre-uroporphyrinogen in several discrete steps. The protein is Porphobilinogen deaminase of Yersinia enterocolitica serotype O:8 / biotype 1B (strain NCTC 13174 / 8081).